Consider the following 182-residue polypeptide: Large ribosomal subunit protein uL6 (182 aa).

Belongs to the universal ribosomal protein uL6 family. In terms of assembly, part of the 50S ribosomal subunit.

In terms of biological role, this protein binds to the 23S rRNA, and is important in its secondary structure. It is located near the subunit interface in the base of the L7/L12 stalk, and near the tRNA binding site of the peptidyltransferase center. The protein is Large ribosomal subunit protein uL6 of Methanococcus vannielii.